Consider the following 849-residue polypeptide: MPSGAQGNTQSAAYKRIVNVSRNFQFKAALNKDTREWTFQHRSSGTALYSAIASLGDPSSPWDAVYVASPGPVQISEGNDHTVETKIDEAAVVHRSSSIVISPEDQEIFLKKATEYYRKKNIEADIVPVWGKVQRVPQAKSSSATITPSVSNKLSTAYQSIKSEALKDGPMYADSVLWDVLHYRIPTLDGYQQHNLWKNFTRWSQYFADNIVSNYRPGDLILIHDYSLFLLPRLIRKQLSDAPIVFFLHAPFCTSEVFRCLSKRAEILKGVLASNVIAMQTDSYTRHFLSTCSNVLGLETTSTHIDTSDGFRVVVFSSHVSIDVPRVYSRCNSKPVSLKIQQLKSLYPSDKKLIVGRDQLTKACGVTHKLRAFRELLIHFPKWRGHVVLIQITSLPVGNNYSNEELKKTENLVAQINSEFGSLDYTPVIHFHQLLDPDEYYALLSVANIACVSSVRDSMNTMALEYVACQQKNKGSLILSEFSGTAELLLSAYLVNPYDYSRFAETINYCLNMTEKERERRFSSLWKQATSQSSQQWIYKLINRAAYEVKALESHMTTPLLTYNILIKPYRNAKRRLFLLDYDGTLIESARNSIDAVPTDRLLRTLKRLASDSRNIVWILSGRSQKFMEEWMGDISELGLSSEHGSAIRPPLAGSWSSCAENLDLSWKDTVRDFFQYYVERTPGSYIEEKKHSISWCYQNANTTYSKFQSLECQTNLEDMLKHYDVEISPAKSFLEVHPNYLNKGSIVRRILKRSGSVDFVFCAGDDKTDENMFEVFLPTAFSNSHLIDEIDSTEYSGSHHTDDNSDANKVENVKVATFRVHIGLTDKPTLSDYHLPAPRDLGELLHNL.

A glycosyltransferase region spans residues 1-558 (MPSGAQGNTQ…VKALESHMTT (558 aa)).

This sequence in the N-terminal section; belongs to the glycosyltransferase 20 family. It in the C-terminal section; belongs to the trehalose phosphatase family. Requires Mg(2+) as cofactor.

Its subcellular location is the cytoplasm. It localises to the nucleus. It carries out the reaction alpha,alpha-trehalose 6-phosphate + H2O = alpha,alpha-trehalose + phosphate. Its pathway is carbohydrate biosynthesis. Phosphatase catalytic subunit of the trehalose synthase complex that catalyzes the production of trehalose from glucose-6-phosphate and UDP-glucose in a two step process. The chain is Trehalose-phosphatase (tps2) from Schizosaccharomyces pombe (strain 972 / ATCC 24843) (Fission yeast).